The sequence spans 1558 residues: Arginine-glutamic acid dipeptide repeats protein (1558 aa).

Positions M1 to R36 are enriched in basic and acidic residues. Residues M1–D90 are disordered. A phosphoserine mark is found at S53 and S56. The span at K74–R85 shows a compositional bias: basic residues. A BAH domain is found at V103–Q283. The residue at position 120 (T120) is a Phosphothreonine. 2 positions are modified to phosphoserine: S142 and S304. In terms of domain architecture, ELM2 spans G284–P387. The 53-residue stretch at L391–E443 folds into the SANT domain. Residues T464–S495 form a disordered region. A compositionally biased stretch (polar residues) spans R465–P474. Over residues S479 to A488 the composition is skewed to low complexity. Residues C507–C532 form a GATA-type zinc finger. The interval L542–F1125 is disordered. K560 participates in a covalent cross-link: Glycyl lysine isopeptide (Lys-Gly) (interchain with G-Cter in SUMO2). A Phosphothreonine modification is found at T593. A phosphoserine mark is found at S594, S600, and S613. Residues S609 to D623 show a composition bias toward low complexity. The segment covering S624–A640 has biased composition (basic and acidic residues). K637 participates in a covalent cross-link: Glycyl lysine isopeptide (Lys-Gly) (interchain with G-Cter in SUMO2). A phosphoserine mark is found at S642, S656, S675, and S679. Over residues E652–E673 the composition is skewed to basic and acidic residues. Positions S688–N708 are enriched in basic and acidic residues. The segment covering R709–D720 has biased composition (polar residues). Residues D726–S752 are compositionally biased toward low complexity. Over residues S778–V792 the composition is skewed to polar residues. Residues L806–A823 are compositionally biased toward pro residues. 3 stretches are compositionally biased toward low complexity: residues P824–H857, G865–Q874, and Q891–P901. The segment covering Q902–P932 has biased composition (pro residues). The segment covering K962–P972 has biased composition (low complexity). Polar residues predominate over residues H1012–Q1023. Pro residues predominate over residues P1027 to G1053. The segment covering P1054 to S1077 has biased composition (low complexity). S1098, S1105, and S1107 each carry phosphoserine. Pro residues predominate over residues S1098–E1109. Residue T1111 is modified to Phosphothreonine. Positions G1148 to S1203 form a coiled coil. At K1150 the chain carries N6-acetyllysine. Basic and acidic residues predominate over residues K1154–A1198. A disordered region spans residues K1154–I1238. Y1251 carries the phosphotyrosine modification. S1258 is modified (phosphoserine).

Interacts with HDAC1 and ATN1. Interaction with ATN1 is improved when the poly-Gln region of ATN1 is extended. Interacts with FAT1.

It localises to the nucleus. It is found in the PML body. In terms of biological role, plays a role as a transcriptional repressor during development. May play a role in the control of cell survival. This Mus musculus (Mouse) protein is Arginine-glutamic acid dipeptide repeats protein (Rere).